The sequence spans 506 residues: Trans-cinnamate 4-monooxygenase C4H1 (506 aa).

2 short sequence motifs (nuclear localization signal) span residues 161 to 168 and 247 to 254; these read VKKMPESA and QRRLQLFK. Cys-448 lines the heme pocket.

Belongs to the cytochrome P450 family. Heme serves as cofactor.

It is found in the nucleus. It catalyses the reaction (E)-cinnamate + reduced [NADPH--hemoprotein reductase] + O2 = (E)-4-coumarate + oxidized [NADPH--hemoprotein reductase] + H2O + H(+). It functions in the pathway phenylpropanoid metabolism; trans-4-coumarate biosynthesis; trans-4-coumarate from trans-cinnamate: step 1/1. Component of the floral volatile benzenoid/phenylpropanoid (FVBP) biosynthetic pathway that controls carbon flux to pigments essential for pollination or UV protection, to numerous pytoalexins synthesized by plants when challenged by pathogens, and to lignins. The protein is Trans-cinnamate 4-monooxygenase C4H1 of Petunia hybrida (Petunia).